We begin with the raw amino-acid sequence, 1067 residues long: TBC1 domain family member 31 (1067 aa).

6 WD repeats span residues 36-75 (GKVV…FRLV), 76-119 (LKTG…SWMR), 120-161 (GHEG…KLNI), 162-201 (RQSV…CKYQ), 202-249 (LPLP…RVIQ), and 250-288 (MPSQ…RFIN). A Rab-GAP TBC domain is found at 419–594 (EYPAKYRMFV…RLFDNIFSNH (176 aa)). Residues 724-773 (QQELLQKAEEQRKHVLEQEEEKLTQQRAKLAAMKRELKVKELQLLDATRR) adopt a coiled-coil conformation. Basic and acidic residues-rich tracts occupy residues 896–912 (KADA…EELQ) and 926–937 (MREEAHRKKDEA). 2 disordered regions span residues 896 to 955 (KADA…HSDG) and 1045 to 1067 (AARA…PVSP). Polar residues-rich tracts occupy residues 941–953 (IQES…STHS) and 1052–1067 (SSAS…PVSP).

The protein resides in the cytoplasm. Its subcellular location is the cytoskeleton. The protein localises to the microtubule organizing center. It localises to the centrosome. It is found in the centriolar satellite. The protein resides in the cilium basal body. Functionally, molecular adapter which is involved in cilium biogenesis. Part of a functional complex including OFD1 a centriolar protein involved in cilium assembly. Could regulate the cAMP-dependent phosphorylation of OFD1, and its subsequent ubiquitination by PJA2 which ultimately leads to its proteasomal degradation. The protein is TBC1 domain family member 31 of Oryzias latipes (Japanese rice fish).